Reading from the N-terminus, the 498-residue chain is Ribosomal RNA small subunit methyltransferase G 2 (498 aa).

The segment at Met1–Ile230 is methyltransferase G. S-adenosyl-L-methionine is bound by residues Gly89, Met94, and Arg154. The tract at residues Arg231–Ala498 is methyltransferase TrmH family.

In the N-terminal section; belongs to the methyltransferase superfamily. RNA methyltransferase RsmG family. This sequence in the C-terminal section; belongs to the class IV-like SAM-binding methyltransferase superfamily. RNA methyltransferase TrmH family.

It is found in the cytoplasm. The enzyme catalyses guanosine(527) in 16S rRNA + S-adenosyl-L-methionine = N(7)-methylguanosine(527) in 16S rRNA + S-adenosyl-L-homocysteine. In terms of biological role, specifically methylates the N7 position of guanine in position 527 of 16S rRNA. This Syntrophobacter fumaroxidans (strain DSM 10017 / MPOB) protein is Ribosomal RNA small subunit methyltransferase G 2 (rsmG2).